Here is a 272-residue protein sequence, read N- to C-terminus: Glucosyl-3-phosphoglycerate/mannosyl-3-phosphoglycerate phosphatase (272 aa).

Asp8 (nucleophile) is an active-site residue. The Mg(2+) site is built by Asp8, Asp10, and Asp214.

Belongs to the HAD-like hydrolase superfamily. MPGP family. Monomer. Co(2+) serves as cofactor. Mg(2+) is required as a cofactor. It depends on Ni(2+) as a cofactor.

The catalysed reaction is (2R)-2-O-(alpha-D-glucopyranosyl)-3-phospho-glycerate + H2O = (2R)-2-O-(alpha-D-glucopyranosyl)-glycerate + phosphate. It catalyses the reaction 2-O-(alpha-D-mannosyl)-3-phosphoglycerate + H2O = (2R)-2-O-(alpha-D-mannosyl)-glycerate + phosphate. Functionally, involved in the biosynthesis of glucosylglycerate. Catalyzes the dephosphorylation of glucosyl-3-phosphoglycerate (GPG) and mannosyl-3-phosphoglycerate (MPG) to glucosylglycerate (GG) and mannosylglycerate (MG), respectively. The sequence is that of Glucosyl-3-phosphoglycerate/mannosyl-3-phosphoglycerate phosphatase from Methanococcoides burtonii (strain DSM 6242 / NBRC 107633 / OCM 468 / ACE-M).